A 240-amino-acid chain; its full sequence is MADIRITGRMVNFSRITFDTNDHDVIRQQLSNILNEGSYQGTVVIIDSTVEQELIALIQLLVSMGLQPMAVIDGILGDEARAIQFPVLPADQPLQRIKPTAEQVAIVEKPSSAQASVETKKPLNNNAVAHITSYHDEILRTGQSLVQDQGDIILKAGMNSGSEVIASGNIHIYGTVRGRVIAGAGGHAAARIFCQSLEAELVSIAGTYCVADDIPKHVVKKPVHIYLNEKQELEFEALEL.

It belongs to the MinC family. In terms of assembly, interacts with MinD and FtsZ.

Its function is as follows. Cell division inhibitor that blocks the formation of polar Z ring septums. Rapidly oscillates between the poles of the cell to destabilize FtsZ filaments that have formed before they mature into polar Z rings. Prevents FtsZ polymerization. This chain is Probable septum site-determining protein MinC, found in Acinetobacter baumannii (strain ACICU).